We begin with the raw amino-acid sequence, 116 residues long: MNDLITLAQAHCQPREKKEHKLGQARLAELLPQVPGWELSNNGHALTRTFRFDNYYRTLAFVNALAFIAHCEDHHPDMSVHYGRAVVCFSTHKIGGISENDFICAAKTSALYEQGI.

Belongs to the pterin-4-alpha-carbinolamine dehydratase family.

It catalyses the reaction (4aS,6R)-4a-hydroxy-L-erythro-5,6,7,8-tetrahydrobiopterin = (6R)-L-erythro-6,7-dihydrobiopterin + H2O. This chain is Putative pterin-4-alpha-carbinolamine dehydratase, found in Xylella fastidiosa (strain 9a5c).